The following is a 636-amino-acid chain: Chaperone protein HtpG (636 aa).

The tract at residues 1 to 342 (MSSETLEFQA…AHDLSLNISR (342 aa)) is a; substrate-binding. The tract at residues 343 to 558 (ELLQQDRQIQ…AHDVTPTLEK (216 aa)) is b. The c stretch occupies residues 559-636 (MYRAMGHEVP…ILAERLARTL (78 aa)).

This sequence belongs to the heat shock protein 90 family. In terms of assembly, homodimer.

It localises to the cytoplasm. Its function is as follows. Molecular chaperone. Has ATPase activity. The sequence is that of Chaperone protein HtpG from Salinispora tropica (strain ATCC BAA-916 / DSM 44818 / JCM 13857 / NBRC 105044 / CNB-440).